A 588-amino-acid chain; its full sequence is Mediator of RNA polymerase II transcription subunit 26 (588 aa).

The TFIIS N-terminal domain maps to 10–87; sequence QMRDRLLQAI…RSWQKLIEPV (78 aa). Disordered stretches follow at residues 112-393 and 412-441; these read RPEM…YTVN and KLTF…PTEQ. A compositionally biased stretch (basic and acidic residues) spans 123–133; the sequence is SIHDLKNRNDI. Polar residues predominate over residues 179 to 191; sequence PLPTNGISGSPES. Residues 207–218 show a composition bias toward basic and acidic residues; that stretch reads SRLEPSDNEKHS. The span at 314 to 325 shows a compositional bias: pro residues; the sequence is SPLPLAQPPTPP. Residues serine 435 and serine 458 each carry the phosphoserine modification.

The protein belongs to the Mediator complex subunit 26 family. As to quaternary structure, component of the Mediator complex, which is composed of MED1, MED4, MED6, MED7, MED8, MED9, MED10, MED11, MED12, MED13, MED13L, MED14, MED15, MED16, MED17, MED18, MED19, MED20, MED21, MED22, MED23, MED24, MED25, MED26, MED27, MED29, MED30, MED31, CCNC, CDK8 and CDC2L6/CDK11. The MED12, MED13, CCNC and CDK8 subunits form a distinct module termed the CDK8 module. Mediator containing the CDK8 module is less active than Mediator lacking this module in supporting transcriptional activation. Individual preparations of the Mediator complex lacking one or more distinct subunits have been variously termed ARC, CRSP, DRIP, PC2, SMCC and TRAP. Interacts with CEBPB (when not methylated).

The protein localises to the nucleus. Functionally, component of the Mediator complex, a coactivator involved in the regulated transcription of nearly all RNA polymerase II-dependent genes. Mediator functions as a bridge to convey information from gene-specific regulatory proteins to the basal RNA polymerase II transcription machinery. Mediator is recruited to promoters by direct interactions with regulatory proteins and serves as a scaffold for the assembly of a functional pre-initiation complex with RNA polymerase II and the general transcription factors. This Mus musculus (Mouse) protein is Mediator of RNA polymerase II transcription subunit 26 (Med26).